We begin with the raw amino-acid sequence, 413 residues long: Arginine deiminase (413 aa).

Cys-403 functions as the Amidino-cysteine intermediate in the catalytic mechanism.

The protein belongs to the arginine deiminase family.

It is found in the cytoplasm. The catalysed reaction is L-arginine + H2O = L-citrulline + NH4(+). It participates in amino-acid degradation; L-arginine degradation via ADI pathway; carbamoyl phosphate from L-arginine: step 1/2. This Clostridium perfringens (strain SM101 / Type A) protein is Arginine deiminase.